Reading from the N-terminus, the 127-residue chain is Thioredoxin domain-containing protein 8 (127 aa).

Residues 2–127 (VQKIKSMREF…KLEEKIQELM (126 aa)) form the Thioredoxin domain. Cysteine 32 and cysteine 35 are disulfide-bonded.

The protein belongs to the thioredoxin family. In terms of tissue distribution, testis-specific. Expressed in spermatozoa, sperm tail, elongated and round spermatids.

It is found in the cytoplasm. The protein localises to the golgi apparatus. Its function is as follows. May be required for post-translational modifications of proteins required for acrosomal biogenesis. May act by reducing disulfide bonds within the sperm. The polypeptide is Thioredoxin domain-containing protein 8 (Txndc8) (Rattus norvegicus (Rat)).